The chain runs to 160 residues: Lipoprotein signal peptidase (160 aa).

2 helical membrane-spanning segments follow: residues 63-83 and 89-109; these read YRLPFFILVSVVALGVIAVTF and DQHLAAAALALIFSGALGNLI. Active-site residues include Asp119 and Asp137. The helical transmembrane segment at 132 to 152 threads the bilayer; that stretch reads AFNVADSAICVGVALLAVDMI.

It belongs to the peptidase A8 family.

The protein resides in the cell inner membrane. It catalyses the reaction Release of signal peptides from bacterial membrane prolipoproteins. Hydrolyzes -Xaa-Yaa-Zaa-|-(S,diacylglyceryl)Cys-, in which Xaa is hydrophobic (preferably Leu), and Yaa (Ala or Ser) and Zaa (Gly or Ala) have small, neutral side chains.. It participates in protein modification; lipoprotein biosynthesis (signal peptide cleavage). Its function is as follows. This protein specifically catalyzes the removal of signal peptides from prolipoproteins. This is Lipoprotein signal peptidase from Geobacter sulfurreducens (strain ATCC 51573 / DSM 12127 / PCA).